The following is a 381-amino-acid chain: Ceropsin (381 aa).

Over 1-62 the chain is Extracellular; sequence MSISMDAGPG…MNPLWHALLG (62 aa). N28 is a glycosylation site (N-linked (GlcNAc...) asparagine). A helical membrane pass occupies residues 63–83; that stretch reads FTIGVLGFISMMGNGMVIYIF. Residues 84–96 lie on the Cytoplasmic side of the membrane; sequence MTTKNLKTPSNLL. The chain crosses the membrane as a helical span at residues 97-117; that stretch reads VVNLAFSDFLMMCAMSPAMVI. At 118-133 the chain is on the extracellular side; that stretch reads NCYNETWVFGPFACEL. N121 carries an N-linked (GlcNAc...) asparagine glycan. C131 and C208 are oxidised to a cystine. The helical transmembrane segment at 134–154 threads the bilayer; the sequence is YGCAGSLFGCASIWTMTMIAF. The Cytoplasmic portion of the chain corresponds to 155–173; that stretch reads DRYNVIVKGIAAKPMTNNG. The chain crosses the membrane as a helical span at residues 174-194; the sequence is ALLRILGIWAFSLAWTVAPFF. Topologically, residues 195 to 221 are extracellular; it reads GWNRYVPEGNMTACGTDYLTKDWFSRS. N204 is a glycosylation site (N-linked (GlcNAc...) asparagine). A helical membrane pass occupies residues 222-242; sequence YIVVYSVFVYFAPLLLIVYSY. Residues 243-284 lie on the Cytoplasmic side of the membrane; the sequence is YYIVQAVSAHEKAMREQAKKMNVASLRSSEAANTSTECKLAK. A helical transmembrane segment spans residues 285–305; that stretch reads VALMTISLWFMAWTPYLVINY. Topologically, residues 306-316 are extracellular; it reads TGILESAPISP. The chain crosses the membrane as a helical span at residues 317-339; the sequence is LATIWGSLFAKANAVYNPIVYGI. Residues 340–381 lie on the Cytoplasmic side of the membrane; the sequence is SHPKYQAALYKRFPVLQCHSTTTDEASSVASGTTVMEEKPTA.

Belongs to the G-protein coupled receptor 1 family. Opsin subfamily. As to expression, expressed bilaterally in dorsal and ventral anterior protocerebral cells and bilaterally in the dorsal posterior protocerebral and lateral posterior tritocerebral cells (at protein level). Expressed in the larval brain but not in the subesophageal ganglion or thoracic ganglion.

The protein resides in the membrane. Functionally, visual pigments are the light-absorbing molecules that mediate vision. They consist of an apoprotein, opsin, covalently linked to cis-retinal. May play a role in photoperiodic photoreception. The protein is Ceropsin of Bombyx mori (Silk moth).